Consider the following 298-residue polypeptide: GTP cyclohydrolase FolE2 (298 aa).

It belongs to the GTP cyclohydrolase IV family.

It carries out the reaction GTP + H2O = 7,8-dihydroneopterin 3'-triphosphate + formate + H(+). Its pathway is cofactor biosynthesis; 7,8-dihydroneopterin triphosphate biosynthesis; 7,8-dihydroneopterin triphosphate from GTP: step 1/1. In terms of biological role, converts GTP to 7,8-dihydroneopterin triphosphate. This is GTP cyclohydrolase FolE2 from Pseudomonas fluorescens (strain Pf0-1).